A 385-amino-acid polypeptide reads, in one-letter code: Lipoyl synthase, mitochondrial (385 aa).

The [4Fe-4S] cluster site is built by Cys-107, Cys-112, Cys-118, Cys-137, Cys-141, Cys-144, and Ser-352. Residues Lys-122–Leu-341 form the Radical SAM core domain.

It belongs to the radical SAM superfamily. Lipoyl synthase family. [4Fe-4S] cluster serves as cofactor.

It is found in the mitochondrion. The catalysed reaction is [[Fe-S] cluster scaffold protein carrying a second [4Fe-4S](2+) cluster] + N(6)-octanoyl-L-lysyl-[protein] + 2 oxidized [2Fe-2S]-[ferredoxin] + 2 S-adenosyl-L-methionine + 4 H(+) = [[Fe-S] cluster scaffold protein] + N(6)-[(R)-dihydrolipoyl]-L-lysyl-[protein] + 4 Fe(3+) + 2 hydrogen sulfide + 2 5'-deoxyadenosine + 2 L-methionine + 2 reduced [2Fe-2S]-[ferredoxin]. It functions in the pathway protein modification; protein lipoylation via endogenous pathway; protein N(6)-(lipoyl)lysine from octanoyl-[acyl-carrier-protein]: step 2/2. In terms of biological role, catalyzes the radical-mediated insertion of two sulfur atoms into the C-6 and C-8 positions of the octanoyl moiety bound to the lipoyl domains of lipoate-dependent enzymes, thereby converting the octanoylated domains into lipoylated derivatives. In Meyerozyma guilliermondii (strain ATCC 6260 / CBS 566 / DSM 6381 / JCM 1539 / NBRC 10279 / NRRL Y-324) (Yeast), this protein is Lipoyl synthase, mitochondrial.